The chain runs to 338 residues: MSVSGLPFDDFRTLLRDLPGPDARALVTARERDAQLTKPPGALGRLEEIAFWLAAWTGRTPAVNRPLVAIFAGNHGVTRQGITPFPPAVTQQMVENFAAGGAAINQICVAYDLGLKVFDLALDYPTGDITEEAALSERDCAATMAFGMEAIAGGTDLLCIGEMGIGNTTIAAAINYALYGGSARDWVGPGTGSEGEMLERKIAAVEKAVELHGDHLDDPLEIMRRLGGREIAAMAGAILAARMERIPVLIDGYVATAAAAILKAANPSALDHCLIGHVSAEPGHLRAIEMLGKTPLLALGMRLGEGTGAALAAGIVKAAAACHSGMATFAQAGVTNKD.

Glutamate 305 functions as the Proton acceptor in the catalytic mechanism.

The protein belongs to the CobT family.

The catalysed reaction is 5,6-dimethylbenzimidazole + nicotinate beta-D-ribonucleotide = alpha-ribazole 5'-phosphate + nicotinate + H(+). It participates in nucleoside biosynthesis; alpha-ribazole biosynthesis; alpha-ribazole from 5,6-dimethylbenzimidazole: step 1/2. In terms of biological role, catalyzes the synthesis of alpha-ribazole-5'-phosphate from nicotinate mononucleotide (NAMN) and 5,6-dimethylbenzimidazole (DMB). The sequence is that of Nicotinate-nucleotide--dimethylbenzimidazole phosphoribosyltransferase from Rhizobium leguminosarum bv. trifolii (strain WSM2304).